Reading from the N-terminus, the 307-residue chain is Elongation factor Ts (307 aa).

Residues 80–83 (TDFV) are involved in Mg(2+) ion dislocation from EF-Tu.

Belongs to the EF-Ts family.

It is found in the cytoplasm. In terms of biological role, associates with the EF-Tu.GDP complex and induces the exchange of GDP to GTP. It remains bound to the aminoacyl-tRNA.EF-Tu.GTP complex up to the GTP hydrolysis stage on the ribosome. In Bradyrhizobium sp. (strain ORS 278), this protein is Elongation factor Ts.